A 390-amino-acid chain; its full sequence is MYVAGVMSGTSLDGIDVALVHIDGSGVDSKVELIHFTTVPFCNDMKNDIQQALSIENSNVQLICSLNFKLGLRFANAVKEVCKEANFPLRQLDLIGSHGQTIYHQPQQDGGMIPSTLQIGEPAIIAYETNTTVISNFRTMDMAAGGQGAPLVPYSEIILYRHQTKNRLLQNIGGIGNVTVIPSQLSEKSVIAFDTGPGNMVMDEVCQRLFQLSYDQNGNIAKQGVVVEEVLTYCMNHPFLKMNPPKSTGREQFGEAFVTGLLNRFKKHSKENILATVTMFTACSIVHHYKAFILPYYEIDEVILGGGGSYNNTLVEMLRNGLREEKCSICIQEDIGHSSAAKEAIAFAILANETYHRNPSNVPSATGAKNSVILGNITFPPYADENEANI.

An ATP-binding site is contributed by 9–16 (GTSLDGID).

The protein belongs to the anhydro-N-acetylmuramic acid kinase family.

The catalysed reaction is 1,6-anhydro-N-acetyl-beta-muramate + ATP + H2O = N-acetyl-D-muramate 6-phosphate + ADP + H(+). It functions in the pathway amino-sugar metabolism; 1,6-anhydro-N-acetylmuramate degradation. It participates in cell wall biogenesis; peptidoglycan recycling. In terms of biological role, catalyzes the specific phosphorylation of 1,6-anhydro-N-acetylmuramic acid (anhMurNAc) with the simultaneous cleavage of the 1,6-anhydro ring, generating MurNAc-6-P. Is required for the utilization of anhMurNAc either imported from the medium or derived from its own cell wall murein, and thus plays a role in cell wall recycling. In Bacillus cereus (strain B4264), this protein is Anhydro-N-acetylmuramic acid kinase.